The sequence spans 85 residues: Cell division topological specificity factor (85 aa).

It belongs to the MinE family.

In terms of biological role, prevents the cell division inhibition by proteins MinC and MinD at internal division sites while permitting inhibition at polar sites. This ensures cell division at the proper site by restricting the formation of a division septum at the midpoint of the long axis of the cell. This chain is Cell division topological specificity factor, found in Deinococcus geothermalis (strain DSM 11300 / CIP 105573 / AG-3a).